Reading from the N-terminus, the 830-residue chain is G-type lectin S-receptor-like serine/threonine-protein kinase SD1-13 (830 aa).

The N-terminal stretch at 1 to 21 (MGCLLILLLTLICFSLRLCLA) is a signal peptide. In terms of domain architecture, Bulb-type lectin spans 22 to 145 (TDVITFSSEF…TNTGDEILWE (124 aa)). Residues 22–434 (TDVITFSSEF…SEFKKRTNRS (413 aa)) lie on the Extracellular side of the membrane. N-linked (GlcNAc...) asparagine glycosylation is found at Asn-40, Asn-53, and Asn-82. An EGF-like; atypical domain is found at 283–321 (PSTKCDTYATCGQFASCRFNPGSTPPCMCIRGFKPQSYA). Intrachain disulfides connect Cys-287-Cys-299 and Cys-293-Cys-309. N-linked (GlcNAc...) asparagine glycans are attached at residues Asn-327, Asn-384, and Asn-432. The PAN domain maps to 340 to 423 (CESRDNNDGS…TGVVFYIRLA (84 aa)). 2 disulfides stabilise this stretch: Cys-377–Cys-398 and Cys-381–Cys-387. A helical membrane pass occupies residues 435 to 455 (IVITVTLLVGAFLFAGTVVLA). Residues 456-830 (LWKIAKHREK…NVSLTKITGR (375 aa)) lie on the Cytoplasmic side of the membrane. The Protein kinase domain maps to 512 to 798 (FSITNKLGQG…NLPEPKQPAF (287 aa)). Residues 518–526 (LGQGGFGAV) and Lys-540 contribute to the ATP site. The residue at position 545 (Thr-545) is a Phosphothreonine. Residues Ser-546 and Ser-561 each carry the phosphoserine modification. Positions 601-618 (VKQRLLDWKTRFNIIDGI) are caM-binding. Asp-637 serves as the catalytic Proton acceptor. Phosphoserine is present on residues Ser-641, Ser-654, and Ser-670. Thr-671 is modified (phosphothreonine). Phosphoserine is present on residues Ser-714, Ser-715, Ser-726, Ser-805, Ser-809, Ser-810, Ser-813, Ser-818, and Ser-823. Residues 789–830 (NLPEPKQPAFIPRRGTSEVESSGQSDPRASINNVSLTKITGR) form a disordered region. Positions 806–830 (EVESSGQSDPRASINNVSLTKITGR) are enriched in polar residues. Residues Thr-825 and Thr-828 each carry the phosphothreonine modification.

The protein belongs to the protein kinase superfamily. Ser/Thr protein kinase family. In terms of assembly, interacts with PUB9, PUB13 and PUB14. Binds to calmodulin (CaM) in a Ca(2+)-dependent manner. In terms of processing, autophosphorylated. In terms of tissue distribution, mostly expressed in rosette leaves, and, to a lower extent, in cauline leaves and stems.

Its subcellular location is the cell membrane. It catalyses the reaction L-seryl-[protein] + ATP = O-phospho-L-seryl-[protein] + ADP + H(+). It carries out the reaction L-threonyl-[protein] + ATP = O-phospho-L-threonyl-[protein] + ADP + H(+). Functionally, receptor-like serine/threonine-protein kinase that represses the disease resistance signaling pathway triggered in response to bacterial pathogen such as Pseudomonas syringae pv. tomato. This chain is G-type lectin S-receptor-like serine/threonine-protein kinase SD1-13 (SD113), found in Arabidopsis thaliana (Mouse-ear cress).